The chain runs to 188 residues: Ribosomal RNA small subunit methyltransferase G (188 aa).

Residues G69, F74, 119–120 (VQ), and R134 each bind S-adenosyl-L-methionine.

The protein belongs to the methyltransferase superfamily. RNA methyltransferase RsmG family.

It is found in the cytoplasm. The enzyme catalyses guanosine(527) in 16S rRNA + S-adenosyl-L-methionine = N(7)-methylguanosine(527) in 16S rRNA + S-adenosyl-L-homocysteine. In terms of biological role, specifically methylates the N7 position of guanine in position 527 of 16S rRNA. This Campylobacter jejuni (strain RM1221) protein is Ribosomal RNA small subunit methyltransferase G.